Reading from the N-terminus, the 249-residue chain is Probable septum site-determining protein MinC (249 aa).

The interval 117 to 138 is disordered; it reads AVRPPQPPPPPHARAEPAAPVA.

The protein belongs to the MinC family. Interacts with MinD and FtsZ.

In terms of biological role, cell division inhibitor that blocks the formation of polar Z ring septums. Rapidly oscillates between the poles of the cell to destabilize FtsZ filaments that have formed before they mature into polar Z rings. Prevents FtsZ polymerization. The chain is Probable septum site-determining protein MinC from Xanthomonas campestris pv. campestris (strain 8004).